The following is a 277-amino-acid chain: Undecaprenyl-diphosphatase 1 (277 aa).

The next 8 helical transmembrane spans lie at 1 to 21 (MSLL…FLPI), 39 to 58 (AGFS…VILY), 85 to 105 (FWFA…GILF), 113 to 133 (FKAP…LIII), 147 to 167 (MTIW…IPGL), 191 to 211 (SFLL…DDLI), 226 to 246 (ASFV…LNLV), and 251 to 271 (LVYF…FQDA).

This sequence belongs to the UppP family.

The protein resides in the cell membrane. The enzyme catalyses di-trans,octa-cis-undecaprenyl diphosphate + H2O = di-trans,octa-cis-undecaprenyl phosphate + phosphate + H(+). In terms of biological role, catalyzes the dephosphorylation of undecaprenyl diphosphate (UPP). Confers resistance to bacitracin. This chain is Undecaprenyl-diphosphatase 1, found in Shouchella clausii (strain KSM-K16) (Alkalihalobacillus clausii).